The following is a 160-amino-acid chain: Cytosolic iron-sulfur assembly component 2A (160 aa).

Residues histidine 89, histidine 123, glutamate 150, and glutamate 153 each coordinate Zn(2+).

The protein belongs to the MIP18 family. As to quaternary structure, monomer and homodimer. Component of the CIA complex. Interacts with CIAO1. Interacts with IREB2. Interacts with APAF1. Substantially enriched in macrophages.

The protein resides in the cytoplasm. Its function is as follows. Component of the cytosolic iron-sulfur protein assembly (CIA) complex, a multiprotein complex that mediates the incorporation of iron-sulfur cluster into extramitochondrial Fe/S proteins. As a CIA complex component and in collaboration with CIAO1 specifically matures ACO1 and stabilizes IREB2, connecting cytosolic iron-sulfur protein maturation with cellular iron regulation. May play a role in chromosome segregation through establishment of sister chromatid cohesion. May induce apoptosis in collaboration with APAF1. The sequence is that of Cytosolic iron-sulfur assembly component 2A from Homo sapiens (Human).